Here is a 292-residue protein sequence, read N- to C-terminus: MKDIATPNRTKDIVEKYGFSFKKSLGQNFLIDTNVLNRIVDHAEIGSESGAIEIGPGIGALTEQLAKRAKKVVAFEIDQRLLPILDETLAPYGNVTVINKDVLKADVHEVFSEQFEEGQDVMVVANLPYYITTPILFKLLEEKLPVRGFVVMMQKEVGDRLAAKPGTKEYGSLSIAIQYYTEVETVMTVPRTVFVPQPNVDSAIIRLLKRPKPVVEVTDETFFFEVVRASFAQRRKTLMNNLSNNLNGFPKDKELLDRILTEVGIDPKRRGETLSIEEFATLSNALVLHKLS.

S-adenosyl-L-methionine-binding residues include asparagine 28, leucine 30, glycine 55, glutamate 76, aspartate 101, and asparagine 126.

Belongs to the class I-like SAM-binding methyltransferase superfamily. rRNA adenine N(6)-methyltransferase family. RsmA subfamily.

Its subcellular location is the cytoplasm. It carries out the reaction adenosine(1518)/adenosine(1519) in 16S rRNA + 4 S-adenosyl-L-methionine = N(6)-dimethyladenosine(1518)/N(6)-dimethyladenosine(1519) in 16S rRNA + 4 S-adenosyl-L-homocysteine + 4 H(+). Its function is as follows. Specifically dimethylates two adjacent adenosines (A1518 and A1519) in the loop of a conserved hairpin near the 3'-end of 16S rRNA in the 30S particle. May play a critical role in biogenesis of 30S subunits. This is Ribosomal RNA small subunit methyltransferase A from Bacillus anthracis.